The sequence spans 311 residues: Malate dehydrogenase (311 aa).

Residues 7 to 13 and Asp-34 each bind NAD(+); that span reads GAAGGIG. Substrate-binding residues include Arg-81 and Arg-87. NAD(+)-binding positions include Asn-94 and 117 to 119; that span reads ITN. Substrate is bound by residues Asn-119 and Arg-153. His-177 serves as the catalytic Proton acceptor. Met-227 provides a ligand contact to NAD(+).

This sequence belongs to the LDH/MDH superfamily. MDH type 1 family. As to quaternary structure, homodimer.

It catalyses the reaction (S)-malate + NAD(+) = oxaloacetate + NADH + H(+). Functionally, catalyzes the reversible oxidation of malate to oxaloacetate. The chain is Malate dehydrogenase from Shewanella denitrificans (strain OS217 / ATCC BAA-1090 / DSM 15013).